A 340-amino-acid polypeptide reads, in one-letter code: Branched-chain-amino-acid aminotransferase (340 aa).

Residue K187 is modified to N6-(pyridoxal phosphate)lysine.

The protein belongs to the class-IV pyridoxal-phosphate-dependent aminotransferase family. Pyridoxal 5'-phosphate is required as a cofactor.

The enzyme catalyses L-leucine + 2-oxoglutarate = 4-methyl-2-oxopentanoate + L-glutamate. It carries out the reaction L-isoleucine + 2-oxoglutarate = (S)-3-methyl-2-oxopentanoate + L-glutamate. It catalyses the reaction L-valine + 2-oxoglutarate = 3-methyl-2-oxobutanoate + L-glutamate. Its pathway is amino-acid biosynthesis; L-isoleucine biosynthesis; L-isoleucine from 2-oxobutanoate: step 4/4. It participates in amino-acid biosynthesis; L-leucine biosynthesis; L-leucine from 3-methyl-2-oxobutanoate: step 4/4. The protein operates within amino-acid biosynthesis; L-valine biosynthesis; L-valine from pyruvate: step 4/4. Functionally, acts on leucine, isoleucine and valine. The sequence is that of Branched-chain-amino-acid aminotransferase (ilvE) from Helicobacter pylori (strain J99 / ATCC 700824) (Campylobacter pylori J99).